We begin with the raw amino-acid sequence, 241 residues long: Putative lipoprotein YvcA (241 aa).

The first 18 residues, 1–18 (MKKIIFICFSLLLALTGG), serve as a signal peptide directing secretion. The N-palmitoyl cysteine moiety is linked to residue Cys-19. A lipid anchor (S-diacylglycerol cysteine) is attached at Cys-19. The disordered stretch occupies residues 22–48 (NDNDKNSTNDNKTEAVKPKDMDPKDLP). Basic and acidic residues predominate over residues 23 to 46 (DNDKNSTNDNKTEAVKPKDMDPKD).

The protein localises to the cell membrane. In terms of biological role, required for complex colony architecture. This chain is Putative lipoprotein YvcA (yvcA), found in Bacillus subtilis (strain 168).